We begin with the raw amino-acid sequence, 329 residues long: Tryptophan--tRNA ligase (329 aa).

ATP-binding positions include 9-11 (QPS) and 17-18 (GN). Residues 10-18 (PSGTITLGN) carry the 'HIGH' region motif. Position 132 (Asp-132) interacts with L-tryptophan. Residues 144–146 (GDD), Val-183, and 192–196 (KMSKS) each bind ATP. The 'KMSKS' region motif lies at 192–196 (KMSKS).

The protein belongs to the class-I aminoacyl-tRNA synthetase family. Homodimer.

Its subcellular location is the cytoplasm. The catalysed reaction is tRNA(Trp) + L-tryptophan + ATP = L-tryptophyl-tRNA(Trp) + AMP + diphosphate + H(+). Catalyzes the attachment of tryptophan to tRNA(Trp). This Bacillus anthracis protein is Tryptophan--tRNA ligase.